Consider the following 480-residue polypeptide: 2-phosphoxylose phosphatase 1 (480 aa).

At 1-6 (MLFRNR) the chain is on the cytoplasmic side. A helical; Signal-anchor for type II membrane protein transmembrane segment spans residues 7 to 27 (FLLLLALAALLAFVSLSLQFF). Topologically, residues 28–480 (HLIPVSTPKN…YYDACHREGF (453 aa)) are lumenal. Catalysis depends on His97, which acts as the Nucleophile. N-linked (GlcNAc...) asparagine glycosylation is found at Asn305 and Asn354. Asp379 functions as the Proton donor in the catalytic mechanism.

It belongs to the histidine acid phosphatase family. As to quaternary structure, interacts with B3GAT3; the interaction increases the 2-phosphoxylose phosphatase activity of PXYLP1 during completion of linkage region formation in a B3GAT3-mediated manner. As to expression, widely expressed. Strongly expressed in spleen, fetal liver, moderately in placenta, pancreas, kidney, thymus and colon.

Its subcellular location is the golgi apparatus membrane. It catalyses the reaction 3-O-[beta-D-GlcA-(1-&gt;3)-beta-D-Gal-(1-&gt;3)-beta-D-Gal-(1-&gt;4)-beta-D-2-O-P-Xyl]-L-seryl-[protein] + H2O = 3-O-(beta-D-GlcA-(1-&gt;3)-beta-D-Gal-(1-&gt;3)-beta-D-Gal-(1-&gt;4)-beta-D-Xyl)-L-seryl-[protein] + phosphate. Its function is as follows. Responsible for the 2-O-dephosphorylation of xylose in the glycosaminoglycan-protein linkage region of proteoglycans thereby regulating the amount of mature glycosaminoglycan (GAG) chains. Sulfated glycosaminoglycans (GAGs), including heparan sulfate and chondroitin sulfate, are synthesized on the so-called common GAG-protein linkage region (GlcUAbeta1-3Galbeta1-3Galbeta1-4Xylbeta1-O-Ser) of core proteins, which is formed by the stepwise addition of monosaccharide residues by the respective specific glycosyltransferases. Xylose 2-O-dephosphorylation during completion of linkage region formation is a prerequisite for the initiation and efficient elongation of the repeating disaccharide region of GAG chains. This is 2-phosphoxylose phosphatase 1 from Homo sapiens (Human).